Here is a 179-residue protein sequence, read N- to C-terminus: Large ribosomal subunit protein uL5 (179 aa).

It belongs to the universal ribosomal protein uL5 family. In terms of assembly, part of the 50S ribosomal subunit; part of the 5S rRNA/L5/L18/L25 subcomplex. Contacts the 5S rRNA and the P site tRNA. Forms a bridge to the 30S subunit in the 70S ribosome.

This is one of the proteins that bind and probably mediate the attachment of the 5S RNA into the large ribosomal subunit, where it forms part of the central protuberance. In the 70S ribosome it contacts protein S13 of the 30S subunit (bridge B1b), connecting the 2 subunits; this bridge is implicated in subunit movement. Contacts the P site tRNA; the 5S rRNA and some of its associated proteins might help stabilize positioning of ribosome-bound tRNAs. The sequence is that of Large ribosomal subunit protein uL5 from Lachnoclostridium phytofermentans (strain ATCC 700394 / DSM 18823 / ISDg) (Clostridium phytofermentans).